Reading from the N-terminus, the 379-residue chain is UDP-4-amino-4-deoxy-L-arabinose--oxoglutarate aminotransferase (379 aa).

Lys182 is subject to N6-(pyridoxal phosphate)lysine.

This sequence belongs to the DegT/DnrJ/EryC1 family. ArnB subfamily. Homodimer. Requires pyridoxal 5'-phosphate as cofactor.

The catalysed reaction is UDP-4-amino-4-deoxy-beta-L-arabinose + 2-oxoglutarate = UDP-beta-L-threo-pentopyranos-4-ulose + L-glutamate. The protein operates within nucleotide-sugar biosynthesis; UDP-4-deoxy-4-formamido-beta-L-arabinose biosynthesis; UDP-4-deoxy-4-formamido-beta-L-arabinose from UDP-alpha-D-glucuronate: step 2/3. Its pathway is bacterial outer membrane biogenesis; lipopolysaccharide biosynthesis. Its function is as follows. Catalyzes the conversion of UDP-4-keto-arabinose (UDP-Ara4O) to UDP-4-amino-4-deoxy-L-arabinose (UDP-L-Ara4N). The modified arabinose is attached to lipid A and is required for resistance to polymyxin and cationic antimicrobial peptides. This chain is UDP-4-amino-4-deoxy-L-arabinose--oxoglutarate aminotransferase, found in Enterobacter sp. (strain 638).